Here is a 321-residue protein sequence, read N- to C-terminus: tRNA(Ile)-lysidine synthase (321 aa).

21 to 26 (SYGSDS) is a binding site for ATP.

Belongs to the tRNA(Ile)-lysidine synthase family.

Its subcellular location is the cytoplasm. The catalysed reaction is cytidine(34) in tRNA(Ile2) + L-lysine + ATP = lysidine(34) in tRNA(Ile2) + AMP + diphosphate + H(+). In terms of biological role, ligates lysine onto the cytidine present at position 34 of the AUA codon-specific tRNA(Ile) that contains the anticodon CAU, in an ATP-dependent manner. Cytidine is converted to lysidine, thus changing the amino acid specificity of the tRNA from methionine to isoleucine. In Campylobacter jejuni subsp. jejuni serotype O:2 (strain ATCC 700819 / NCTC 11168), this protein is tRNA(Ile)-lysidine synthase.